A 525-amino-acid chain; its full sequence is GMP synthase [glutamine-hydrolyzing] (525 aa).

In terms of domain architecture, Glutamine amidotransferase type-1 spans 9–207 (RILILDFGSQ…VRDICQCEAL (199 aa)). The active-site Nucleophile is C86. Catalysis depends on residues H181 and E183. A GMPS ATP-PPase domain is found at 208 to 400 (WTPAKIIDDA…LGLPYDMLYR (193 aa)). ATP is bound at residue 235–241 (SGGVDSS).

Homodimer.

It catalyses the reaction XMP + L-glutamine + ATP + H2O = GMP + L-glutamate + AMP + diphosphate + 2 H(+). Its pathway is purine metabolism; GMP biosynthesis; GMP from XMP (L-Gln route): step 1/1. Catalyzes the synthesis of GMP from XMP. The protein is GMP synthase [glutamine-hydrolyzing] of Citrobacter koseri (strain ATCC BAA-895 / CDC 4225-83 / SGSC4696).